The primary structure comprises 221 residues: GFP-like non-fluorescent chromoprotein (221 aa).

The 2-iminomethyl-5-imidazolinone (Gln-Gly) cross-link spans 62-64; it reads QYG. Tyr63 carries the post-translational modification 2,3-didehydrotyrosine.

This sequence belongs to the GFP family. In terms of assembly, homotetramer. Post-translationally, contains a chromophore consisting of modified amino acid residues. The chromophore is formed by autocatalytic backbone condensation between Xaa-N and Gly-(N+2), oxidation of Tyr-(N+1) to didehydrotyrosine, and formation of a double bond to the alpha-amino nitrogen of residue Xaa-N. Maturation of the chromophore requires nothing other than molecular oxygen. The precise stereochemistry of the tyrosine has not been determined.

Its function is as follows. Non-fluorescent pigment protein that is lilac in color. The polypeptide is GFP-like non-fluorescent chromoprotein (Goniopora tenuidens (Anemone coral)).